We begin with the raw amino-acid sequence, 220 residues long: Probable GTP-binding protein EngB (220 aa).

The region spanning 41-219 is the EngB-type G domain; sequence DRSEVCFAGR…RAEIAALAML (179 aa). GTP is bound by residues 49–56, 76–80, 96–99, 164–167, and 197–200; these read GRSNVGKS, GRTRE, DLPG, TKVD, and MTSA. Mg(2+) is bound by residues serine 56 and threonine 78.

It belongs to the TRAFAC class TrmE-Era-EngA-EngB-Septin-like GTPase superfamily. EngB GTPase family. Requires Mg(2+) as cofactor.

Functionally, necessary for normal cell division and for the maintenance of normal septation. This chain is Probable GTP-binding protein EngB, found in Hyphomonas neptunium (strain ATCC 15444).